The following is a 157-amino-acid chain: Snaclec EMS16 subunit alpha (157 aa).

A signal peptide spans 1 to 23 (MGRFISVSFGLLVVFLSLSGTGA). Disulfide bonds link C27–C38, C55–C152, and C127–C144. Positions 34–153 (YDQHCYLAIG…CEDLYPFVCK (120 aa)) constitute a C-type lectin domain.

The protein belongs to the snaclec family. In terms of assembly, heterodimer of subunits A and B; disulfide-linked. Expressed by the venom gland.

It is found in the secreted. Functionally, EMS16 is a potent and selective inhibitor of alpha-2/beta-1 (ITGA2/ITGB1) integrin and acts as a potent antagonist of platelet aggregation and cell migration. Binds specifically to the I domain of the alpha-2 subunit, in a metal ion-independent fashion. This chain is Snaclec EMS16 subunit alpha, found in Echis multisquamatus (Central Asian sand viper).